The sequence spans 8799 residues: Nesprin-1 (8799 aa).

Positions 1-289 (MATSRASSRS…TQYPDIHGAG (289 aa)) are actin-binding. The Cytoplasmic portion of the chain corresponds to 1–8748 (MATSRASSRS…GRAFLFRILR (8748 aa)). Calponin-homology (CH) domains lie at 27-134 (IVQK…LYFQ) and 178-283 (GNAK…TQYP). Spectrin repeat units lie at residues 314 to 397 (RDDR…SRLF), 398 to 502 (DWHI…HLMK), 503 to 609 (MEFL…SMLE), 610 to 703 (EVIS…YARA), 704 to 815 (DEMD…QLTV), 816 to 923 (PLEE…KHVE), 924 to 1024 (ANSR…HLKI), 1025 to 1122 (AVEK…LVDD), 1123 to 1246 (PDKW…SSLE), 1247 to 1333 (GLIS…ERRI), 1334 to 1442 (QVSL…MEMV), 1443 to 1548 (KSKW…ILGH), 1549 to 1651 (LSQQ…LEDL), 1652 to 1761 (LARW…LQSV), 1762 to 1877 (LAEH…SHAC), 1878 to 1974 (MSTL…ADAL), 1975 to 2079 (VALK…QGQC), 2080 to 2193 (CGLI…LRVS), 2194 to 2301 (LSIW…KDFT), 2302 to 2399 (AQRT…QTQA), 2400 to 2511 (RIQD…LQDC), 2512 to 2617 (VSEL…LRSC), 2618 to 2729 (QLAL…LESV), 2730 to 2836 (IDQW…VEDL), 2837 to 2960 (VKDH…FGQV), 2961 to 3060 (TQLE…QNKE), 3061 to 3169 (QILQ…LENL), 3170 to 3273 (KIQM…VSRL), 3274 to 3385 (DRII…LEGA), 3386 to 3488 (LSKW…LEKL), 3489 to 3591 (VRLH…RMQL), 3592 to 3718 (NNVV…YSDW), 3719 to 3812 (YGST…LEKG), 3813 to 3918 (LHLA…LEAK), 3919 to 4026 (VKDH…QRVY), 4027 to 4137 (RSLE…KSLK), 4138 to 4233 (AELW…REQD), 4234 to 4337 (LQRT…IQVS), 4338 to 4449 (VTNL…LNKA), 4450 to 4558 (LSEK…LEKS), 4559 to 4667 (LVSR…TQEA), 4668 to 4774 (ILAR…LEDT), 4775 to 4880 (TSVY…CESR), 4881 to 4989 (MVQS…LTEI), 4990 to 5097 (YSRC…LQRC), 5098 to 5207 (MVQW…LEDA), 5208 to 5316 (VDEW…GKLV), 5317 to 5422 (KQEL…EEGK), 5423 to 5520 (AMSQ…LSKL), 5521 to 5628 (NQAL…LQDA), 5629 to 5745 (AKDM…PKEA), and 5746 to 5851 (VVQY…PSAH). The stretch at 314 to 8666 (RDDRLILKET…DLEKLLDMSS (8353 aa)) forms a coiled coil. Lys377 is subject to Phosphoserine. Ser732 bears the Phosphoserine mark. The tract at residues 1288–1310 (KKRDLQEQMEQAQQGGQAGPGQE) is disordered. Residue Thr2268 is modified to Phosphothreonine. Ser5655 carries the phosphoserine modification. Positions 5868-5894 (PVTEESGEEGTNSEISSPPACRSPSPV) are disordered. Spectrin repeat units lie at residues 5971–6080 (LERQ…LEEK), 6081–6187 (LSDQ…SLGE), 6377–6488 (RQSI…RLQQ), 6489–6584 (ILRF…RSSL), 6585–6694 (HQNL…LEMW), 6695–6798 (SHLD…TILK), 6799–6905 (HWTR…QEKL), 6906–7023 (HQLQ…LEGL), 7024–7131 (LESW…LTSA), 7132–7240 (LGQW…SKAL), 7241–7353 (LQLW…LQAG), 7354–7457 (VVDY…LQSF), 7458–7561 (LLQH…RGII), 7562–7674 (DSQI…LAFL), 7675–7786 (LKDW…NEWA), 7787–7886 (VFSE…LKET), 7887–8000 (LVAV…IEET), 8001–8109 (WRLW…LKHF), and 8110–8221 (ISQR…VRLP). Phosphoserine is present on residues Asp8225 and Ser8227. The interval 8237–8287 (TALSDLRWQDPSADGMPSPQPSSNPSLSLPQPLRSERSGRDTPASVDSIPL) is disordered. Over residues 8257-8269 (PSSNPSLSLPQPL) the composition is skewed to low complexity. Thr8278 carries the phosphothreonine modification. Residues Ser8281, Ser8284, and Ser8308 each carry the phosphoserine modification. 3 Spectrin repeats span residues 8332–8440 (SSLE…MKQN), 8441–8550 (LQKW…LQDA), and 8551–8668 (LMQC…SSSQ). Thr8363 is subject to Phosphothreonine. The interval 8673–8735 (SWSSADELDT…SDSSRSDPRP (63 aa)) is disordered. Polar residues-rich tracts occupy residues 8682 to 8698 (TSGS…PNRQ) and 8706 to 8718 (SLSQ…SSPK). The span at 8721–8735 (STRDGSDSSRSDPRP) shows a compositional bias: basic and acidic residues. Positions 8740–8799 (RAFLFRILRAALPFQLLLLLLIGLTCLVPMSEKDYSCALSNNFARSFHPMLRYTNGPPPL) constitute a KASH domain. A helical; Anchor for type IV membrane protein membrane pass occupies residues 8749 to 8769 (AALPFQLLLLLLIGLTCLVPM). Residues 8770–8799 (SEKDYSCALSNNFARSFHPMLRYTNGPPPL) are Perinuclear space-facing.

Belongs to the nesprin family. Core component of LINC complexes which are composed of inner nuclear membrane SUN domain-containing proteins coupled to outer nuclear membrane KASH domain-containing nesprins. SUN and KASH domain-containing proteins seem to bind each other promiscuously; however, differentially expression of LINC complex constituents can give rise to specific assemblies. At least SUN1/2-containing core LINC complexes are proposed to be hexameric composed of three protomers of each KASH and SUN domain-containing protein. The SUN2:SYNE1/KASH1 LINC complex is a heterohexamer; the homotrimeric cloverleave-like conformation of the SUN domain is a prerequisite for LINC complex formation in which three separate SYNE1/KASH1 peptides bind at the interface of adjacent SUN domains. Self-associates. Interacts with SYNE3. Interacts with SUN3; proposed to form a spermatogenesis-specific LINC complex with SUN3 during sperm head formation. May interact with MUSK. Interacts with SPAG4/SUN4. Interacts with EMD and LMNA in vitro. Interacts with F-actin via its N-terminal domain. Interacts with DCTN1 and DYNC1I1/2; suggesting the association with the dynein-dynactin motor complex. Interacts (via KASH domain) with TMEM258. Post-translationally, the disulfid bond with SUN1 or SUN2 is required for stability of the respective LINC complex under tensile forces. In terms of tissue distribution, expressed in C2F3 and CH310T1/2 cells, brain and skeletal muscle (at protein level).

Its subcellular location is the nucleus outer membrane. The protein localises to the nucleus. It is found in the nucleus envelope. The protein resides in the cytoplasm. It localises to the cytoskeleton. Its subcellular location is the myofibril. The protein localises to the sarcomere. In terms of biological role, multi-isomeric modular protein which forms a linking network between organelles and the actin cytoskeleton to maintain the subcellular spatial organization. As a component of the LINC (LInker of Nucleoskeleton and Cytoskeleton) complex involved in the connection between the nuclear lamina and the cytoskeleton. The nucleocytoplasmic interactions established by the LINC complex play an important role in the transmission of mechanical forces across the nuclear envelope and in nuclear movement and positioning. May be involved in nucleus-centrosome attachment. During interkinetic nuclear migration (INM) at G2 phase and nuclear migration in neural progenitors its LINC complex association with SUN1/2 and probably association with cytoplasmic dynein-dynactin motor complexes functions to pull the nucleus toward the centrosome; SYNE1 and SYNE2 seem to act redundantly in cerebellum, midbrain, brain stem, and other brain regions except cerebral cortex and hippocampus. Required for centrosome migration to the apical cell surface during early ciliogenesis. May be involved in nuclear remodeling during sperm head formation in spermatogenesis; a probable SUN3:SYNE1/KASH1 LINC complex may tether spermatid nuclei to posterior cytoskeletal structures such as the manchette. The protein is Nesprin-1 of Mus musculus (Mouse).